The following is a 486-amino-acid chain: Cardiolipin synthase A (486 aa).

2 consecutive transmembrane segments (helical) span residues 3–23 and 38–58; these read TFYT…IAGV and MAWL…YLSV. PLD phosphodiesterase domains are found at residues 219-246 and 399-426; these read MDLR…VDPR and EGGL…DMRS. Active-site residues include histidine 224, lysine 226, aspartate 231, histidine 404, lysine 406, and aspartate 411.

This sequence belongs to the phospholipase D family. Cardiolipin synthase subfamily. ClsA sub-subfamily.

The protein localises to the cell inner membrane. The catalysed reaction is 2 a 1,2-diacyl-sn-glycero-3-phospho-(1'-sn-glycerol) = a cardiolipin + glycerol. Functionally, catalyzes the reversible phosphatidyl group transfer from one phosphatidylglycerol molecule to another to form cardiolipin (CL) (diphosphatidylglycerol) and glycerol. The chain is Cardiolipin synthase A from Salmonella choleraesuis (strain SC-B67).